Consider the following 541-residue polypeptide: Transcription termination factor MTERF4, chloroplastic (541 aa).

The transit peptide at 1 to 45 (MKIRFCNGFTKPGFLLVHFEPPSFFAVRSRSLSDSTYGNLCNHKK) directs the protein to the chloroplast. 2 disordered regions span residues 66–103 (SRSLDSPRRERSSRSSSSSGRDRDRDKDKGRDSKSLYS) and 503–541 (EVETDPSSFDMNTLMQPEREEESDSEYEEEEDDDDEEFA). A compositionally biased stretch (basic and acidic residues) spans 85–99 (GRDRDRDKDKGRDSK). Polar residues predominate over residues 507–517 (DPSSFDMNTLM). Acidic residues predominate over residues 521–541 (REEESDSEYEEEEDDDDEEFA).

The protein belongs to the mTERF family.

Its subcellular location is the plastid. It localises to the chloroplast. The protein resides in the mitochondrion. In terms of biological role, transcription termination factor required for processing and steady-state levels of plastid transcripts. Required for splicing of the chloroplastic Clp protease (ClpP) group IIa intron. Required for maturation of 16S rRNA and 23S rRNA in the chloroplast. Essential for embryogenesis. Required for the maintenance of the correct levels of transcripts in the mitochondria and chloroplasts. The chain is Transcription termination factor MTERF4, chloroplastic from Arabidopsis thaliana (Mouse-ear cress).